A 293-amino-acid polypeptide reads, in one-letter code: LysM and putative peptidoglycan-binding domain-containing protein 4 (293 aa).

Residues 1–214 lie on the Extracellular side of the membrane; sequence MRQKEVLAKS…VADGADCGIQ (214 aa). Positions 28–65 are disordered; it reads FNNGSGDSGDSSEEESHQVVLRPRGKEHQKNSSQRPGA. N-linked (GlcNAc...) asparagine glycosylation occurs at N30. The region spanning 71–115 is the LysM domain; sequence LQRELAQEDSLNKLALQYGCKVADIKKANNFIREQDLYALKSIKI. A helical membrane pass occupies residues 215 to 235; it reads WWNAVFLMLLIGIVLPVFYLV. The Cytoplasmic portion of the chain corresponds to 236 to 293; the sequence is YFKIQATGEPSNGLNATVVPNGSMTLSPVPGQAPRLAIPVPTLPASDSQVSPTTQAGA.

Its subcellular location is the membrane. The sequence is that of LysM and putative peptidoglycan-binding domain-containing protein 4 (Lysmd4) from Mus musculus (Mouse).